The chain runs to 156 residues: Small ribosomal subunit protein bS18c (156 aa).

A disordered region spans residues 1 to 54 (MYTSKQPFLKSKQPFRKSKQPFRKSKQPFRKFKKPFRKSKQPFRRRPRIGPGDR). The segment covering 13–48 (QPFRKSKQPFRKSKQPFRKFKKPFRKSKQPFRRRPR) has biased composition (basic residues).

This sequence belongs to the bacterial ribosomal protein bS18 family. As to quaternary structure, part of the 30S ribosomal subunit.

Its subcellular location is the plastid. The protein localises to the chloroplast. This is Small ribosomal subunit protein bS18c from Lolium perenne (Perennial ryegrass).